The primary structure comprises 365 residues: G-protein coupled receptor 68 (365 aa).

Residues 1 to 12 (MGNITADNSSMS) lie on the Extracellular side of the membrane. N-linked (GlcNAc...) asparagine glycans are attached at residues Asn3 and Asn8. A helical membrane pass occupies residues 13–49 (CTIDHTIHQTLAPVVYVTVLVVGFPANCLSLYFGYLQ). 2 cysteine pairs are disulfide-bonded: Cys13–Cys258 and Cys94–Cys172. The Cytoplasmic segment spans residues 50 to 53 (IKAR). The chain crosses the membrane as a helical span at residues 54-84 (NELGVYLCNLTVADLFYICSLPFWLQYVLQH). The Extracellular portion of the chain corresponds to 85–89 (DNWSH). The chain crosses the membrane as a helical span at residues 90-125 (GDLSCQVCGILLYENIYISVGFLCCISVDRYLAVAH). The Cytoplasmic portion of the chain corresponds to 126–133 (PFRFHQFR). The helical transmembrane segment at 134–160 (TLKAAVGVSVVIWAKELLTSIYFLMHE) threads the bilayer. Over 161 to 176 (EVIEDENQHRVCFEHY) the chain is Extracellular. The segment at 161 to 176 (EVIEDENQHRVCFEHY) is extracellular loop 2 (ECL2). A helical transmembrane segment spans residues 177 to 214 (PIQAWQRAINYYRFLVGFLFPICLLLASYQGILRAVRR). Topologically, residues 215–218 (SHGT) are cytoplasmic. Residues 219–254 (QKSRKDQIQRLVLSTVVIFLACFLPYHVLLLVRSVW) traverse the membrane as a helical segment. The Extracellular segment spans residues 255–260 (EASCDF). Residues 261–289 (AKGVFNAYHFSLLLTSFNCVADPVLYCFV) traverse the membrane as a helical segment. The Cytoplasmic portion of the chain corresponds to 290–365 (SETTHRDLAR…SGGFPTGRLA (76 aa)). Positions 345–365 (HPAFQTPNSPGSGGFPTGRLA) are disordered. Residues 355-365 (GSGGFPTGRLA) are compositionally biased toward gly residues.

This sequence belongs to the G-protein coupled receptor 1 family. As to expression, found at low level in a wide range of tissues, but significantly expressed in lung, kidney, bone and nervous system.

The protein resides in the cell membrane. Activated by a network of residues that connects an extracellular-facing cavity to Glu-149, a conserved charged residue buried in the transmembrane core of the receptor. Protonation likely drives conformational changes in extracellular loop 2 (ECL2), which stabilizes movement of transmembrane 3 (TM3) and a series of rearrangements that connect the extracellular-facing cavity to Glu-149, a residue only conserved in proton-sensing G-protein coupled receptors. Activated in an allosteric manner by divalent metal ions at the extracellular surface following the order: Cd(2+) &gt; Co(2+) &gt; Ni(2+) &gt; Zn(2+) &gt; Fe(2+) &gt; Ca(2+) &gt; Mg(2+). Activated by the benzodiazepine drug lorazepam, a non-selective GPR68 positive allosteric modulator. Activated by ogerin (ZINC67740571), a selective GPR68 positive allosteric modulator. Activated by small molecule MS48107, a selective positive allosteric modulator. Inhibited by small molecule ogremorphin, inducing ferroptosis in cancer cells. Functionally, proton-sensing G-protein coupled receptor activated by extracellular pH, which is required to monitor pH changes and generate adaptive reactions. The receptor is almost silent at pH 7.8 but fully activated at pH 6.8. Ligand binding causes a conformation change that triggers signaling via guanine nucleotide-binding proteins (G proteins) and modulates the activity of downstream effectors, such as phospholipase C. GPR68 is mainly coupled to G(q) G proteins and mediates production of diacylglycerol (DAG) and inositol 1,4,5-trisphosphate (IP3). Acts as a key mechanosensor of fluid shear stress and membrane stretch. Expressed in endothelial cells of small-diameter resistance arteries, where it mediates flow-induced dilation in response to shear stress. May represents an osteoblastic pH sensor regulating cell-mediated responses to acidosis in bone. Acts as a regulator of calcium-sensing receptor CASR in a seesaw manner: GPR68-mediated signaling inhibits CASR signaling in response to protons, while CASR inhibits GPR68 in presence of extracellular calcium. The protein is G-protein coupled receptor 68 of Homo sapiens (Human).